The primary structure comprises 441 residues: Glutamyl-tRNA reductase (441 aa).

Substrate-binding positions include 49–52, Ser109, 114–116, and Gln120; these read TCNR and EGQ. Cys50 serves as the catalytic Nucleophile. 198 to 203 contributes to the NADP(+) binding site; sequence GAGRMS.

It belongs to the glutamyl-tRNA reductase family. Homodimer.

It carries out the reaction (S)-4-amino-5-oxopentanoate + tRNA(Glu) + NADP(+) = L-glutamyl-tRNA(Glu) + NADPH + H(+). The protein operates within porphyrin-containing compound metabolism; protoporphyrin-IX biosynthesis; 5-aminolevulinate from L-glutamyl-tRNA(Glu): step 1/2. It functions in the pathway porphyrin-containing compound metabolism; chlorophyll biosynthesis. In terms of biological role, catalyzes the NADPH-dependent reduction of glutamyl-tRNA(Glu) to glutamate 1-semialdehyde (GSA). The chain is Glutamyl-tRNA reductase from Prochlorococcus marinus (strain NATL1A).